The chain runs to 448 residues: Bifunctional protein GlmU (448 aa).

A pyrophosphorylase region spans residues 1–232 (MSDRSLLVVV…ADEVAGVNSR (232 aa)). UDP-N-acetyl-alpha-D-glucosamine is bound by residues 11-14 (LAAG), Lys-25, Gln-78, and 83-84 (GT). Asp-108 provides a ligand contact to Mg(2+). UDP-N-acetyl-alpha-D-glucosamine contacts are provided by Gly-144, Glu-158, Asn-173, and Asn-230. Asn-230 is a Mg(2+) binding site. Positions 233-253 (VQLAEAEAILQRRLRLAAMAG) are linker. The N-acetyltransferase stretch occupies residues 254–448 (GATLVAPETV…FRAARSKPKG (195 aa)). Residues Arg-319 and Lys-337 each contribute to the UDP-N-acetyl-alpha-D-glucosamine site. His-349 serves as the catalytic Proton acceptor. 2 residues coordinate UDP-N-acetyl-alpha-D-glucosamine: Tyr-352 and Asn-363. Acetyl-CoA is bound by residues Ala-366, 372–373 (NY), Thr-409, and Arg-426.

This sequence in the N-terminal section; belongs to the N-acetylglucosamine-1-phosphate uridyltransferase family. It in the C-terminal section; belongs to the transferase hexapeptide repeat family. Homotrimer. Mg(2+) is required as a cofactor.

Its subcellular location is the cytoplasm. It catalyses the reaction alpha-D-glucosamine 1-phosphate + acetyl-CoA = N-acetyl-alpha-D-glucosamine 1-phosphate + CoA + H(+). It carries out the reaction N-acetyl-alpha-D-glucosamine 1-phosphate + UTP + H(+) = UDP-N-acetyl-alpha-D-glucosamine + diphosphate. It participates in nucleotide-sugar biosynthesis; UDP-N-acetyl-alpha-D-glucosamine biosynthesis; N-acetyl-alpha-D-glucosamine 1-phosphate from alpha-D-glucosamine 6-phosphate (route II): step 2/2. It functions in the pathway nucleotide-sugar biosynthesis; UDP-N-acetyl-alpha-D-glucosamine biosynthesis; UDP-N-acetyl-alpha-D-glucosamine from N-acetyl-alpha-D-glucosamine 1-phosphate: step 1/1. Its pathway is bacterial outer membrane biogenesis; LPS lipid A biosynthesis. Catalyzes the last two sequential reactions in the de novo biosynthetic pathway for UDP-N-acetylglucosamine (UDP-GlcNAc). The C-terminal domain catalyzes the transfer of acetyl group from acetyl coenzyme A to glucosamine-1-phosphate (GlcN-1-P) to produce N-acetylglucosamine-1-phosphate (GlcNAc-1-P), which is converted into UDP-GlcNAc by the transfer of uridine 5-monophosphate (from uridine 5-triphosphate), a reaction catalyzed by the N-terminal domain. The chain is Bifunctional protein GlmU from Xanthobacter autotrophicus (strain ATCC BAA-1158 / Py2).